Here is a 153-residue protein sequence, read N- to C-terminus: FAD synthase (153 aa).

ATP contacts are provided by residues 9-10 (TF), 14-17 (HPGH), D97, and Y124.

This sequence belongs to the archaeal FAD synthase family. In terms of assembly, homodimer. A divalent metal cation is required as a cofactor.

The catalysed reaction is FMN + ATP + H(+) = FAD + diphosphate. It participates in cofactor biosynthesis; FAD biosynthesis; FAD from FMN: step 1/1. Catalyzes the transfer of the AMP portion of ATP to flavin mononucleotide (FMN) to produce flavin adenine dinucleotide (FAD) coenzyme. The chain is FAD synthase from Methanobrevibacter smithii (strain ATCC 35061 / DSM 861 / OCM 144 / PS).